A 362-amino-acid chain; its full sequence is Talin rod domain-containing protein 1 (362 aa).

The tract at residues 1–26 (MASGSAGKPTGEAASPAPASAIGGAS) is disordered. A2 bears the N-acetylalanine mark. A compositionally biased stretch (low complexity) spans 13–26 (AASPAPASAIGGAS).

In terms of assembly, may homodimerize. Interacts with F-actin.

Functionally, actin-binding protein which may have an oncogenic function and regulates cell proliferation, migration and invasion in cancer cells. This is Talin rod domain-containing protein 1 from Homo sapiens (Human).